Here is an 84-residue protein sequence, read N- to C-terminus: Double gene block protein 2 (84 aa).

The Lumenal segment spans residues 1-4 (MPSA). The chain crosses the membrane as a helical span at residues 5 to 25 (NLHPIVLTGVIGLMLLIRLRC). At 26 to 30 (TFTST) the chain is on the cytoplasmic side. The chain crosses the membrane as a helical span at residues 31–51 (FSLPPLVTLNQIIALSFCGLL). Over 52-84 (LNSISRAERACYYNYSVDSSKQQHISISTPNGK) the chain is Lumenal.

The protein belongs to the carmovirus double gene block protein 2 family.

It is found in the host endoplasmic reticulum membrane. In terms of biological role, cell-to-cell movement function. The chain is Double gene block protein 2 from Carnation mottle virus (isolate China/Shanghai) (CarMV).